The sequence spans 148 residues: Large ribosomal subunit protein bL9 (148 aa).

This sequence belongs to the bacterial ribosomal protein bL9 family.

In terms of biological role, binds to the 23S rRNA. This chain is Large ribosomal subunit protein bL9, found in Ectopseudomonas mendocina (strain ymp) (Pseudomonas mendocina).